The following is a 315-amino-acid chain: MDLRQFLMCLSLCTAFALSKPTEKKDRVHHEPQLSDKVHNDAQSFDYDHDAFLGAEEAKTFDQLTPEESKERLGMIVDKIDADKDGFVTEGELKSWIKHAQKKYIYDNVENQWQEFDLNQDGLISWDEYRNVTYGTYLDDPDPDDGFNYKQMMVRDERRFKMADKDGDLIATKEEFTAFLHPEEYDYMKDIVVQEPMEDIDKNADGFIDLEEYIGDMYSHDGNADEPEWVKTEREQFVEFRDKNRDGKMDKEETKDWILPSDYDHAEAEARHLVYESDQNKDGKLTKEEIVDKYDLFVGSQATDFGEALVRHDEF.

The first 19 residues, 1–19, serve as a signal peptide directing secretion; it reads MDLRQFLMCLSLCTAFALS. Ser-44 carries the phosphoserine modification. Position 47 is a phosphotyrosine (Tyr-47). Thr-65 carries the post-translational modification Phosphothreonine. EF-hand domains are found at residues 68-103, 104-139, 151-186, 188-223, 229-264, and 265-300; these read ESKERLGMIVDKIDADKDGFVTEGELKSWIKHAQKK, YIYDNVENQWQEFDLNQDGLISWDEYRNVTYGTYLD, QMMVRDERRFKMADKDGDLIATKEEFTAFLHPEEYD, MKDIVVQEPMEDIDKNADGFIDLEEYIGDMYSHDGN, WVKTEREQFVEFRDKNRDGKMDKEETKDWILPSDYD, and HAEAEARHLVYESDQNKDGKLTKEEIVDKYDLFVGS. A Phosphoserine modification is found at Ser-69. The Ca(2+) site is built by Asp-81, Asp-83, Asp-85, Glu-92, Asp-117, Asn-119, Asp-121, and Glu-128. A glycan (N-linked (GlcNAc...) asparagine) is linked at Asn-131. Ca(2+) is bound at residue Asp-164. Lys-165 is modified (N6-acetyllysine). Positions 166, 168, 175, 201, 203, 205, 212, 242, 244, 246, 248, and 253 each coordinate Ca(2+). Thr-254 is subject to Phosphothreonine. Phosphoserine is present on residues Ser-261 and Ser-277. Asp-278, Asn-280, Asp-282, Lys-284, and Glu-289 together coordinate Ca(2+). The Prevents secretion from ER motif lies at 312–315; it reads HDEF.

Belongs to the CREC family. Interacts with GGCX.

Its subcellular location is the endoplasmic reticulum membrane. It localises to the golgi apparatus. The protein resides in the secreted. It is found in the melanosome. The protein localises to the sarcoplasmic reticulum lumen. In terms of biological role, involved in regulation of vitamin K-dependent carboxylation of multiple N-terminal glutamate residues. Seems to inhibit gamma-carboxylase GGCX. Binds 7 calcium ions with a low affinity. The sequence is that of Calumenin (CALU) from Bos taurus (Bovine).